The sequence spans 144 residues: MEALVLVGHGSRLPHSKNVVMEVAEKIKARNIYDIVEVGMMEFNEPTIPQTIKKVIDAGAKKVIVTPVFLAPGNHTERDIPKILGIYEGDDEGGHHHHHDHEHHHHHHDTTAVEIPEGVELVYRKPMGADDRIIDIVLDRANGL.

The active-site Proton acceptor is the histidine 9. Histidine 9 is a Co(2+) binding site. Histidine 9 contributes to the Ni(2+) binding site. Substrate is bound by residues glutamate 45 and 70 to 75 (LAPGNH). Histidine 75 lines the Co(2+) pocket. Residue histidine 75 coordinates Ni(2+). The segment at 89–112 (GDDEGGHHHHHDHEHHHHHHDTTA) is disordered. The span at 95–108 (HHHHHDHEHHHHHH) shows a compositional bias: basic residues.

The protein belongs to the CbiX family. CbiXS subfamily. Homotetramer; dimer of dimers.

It catalyses the reaction Co-sirohydrochlorin + 2 H(+) = sirohydrochlorin + Co(2+). It carries out the reaction Ni-sirohydrochlorin + 2 H(+) = sirohydrochlorin + Ni(2+). The protein operates within cofactor biosynthesis; adenosylcobalamin biosynthesis; cob(II)yrinate a,c-diamide from sirohydrochlorin (anaerobic route): step 1/10. In terms of biological role, catalyzes the insertion of Co(2+) into sirohydrochlorin as part of the anaerobic pathway to cobalamin biosynthesis. Involved in the biosynthesis of the unique nickel-containing tetrapyrrole coenzyme F430, the prosthetic group of methyl-coenzyme M reductase (MCR), which plays a key role in methanogenesis and anaerobic methane oxidation. Catalyzes the insertion of Ni(2+) into sirohydrochlorin to yield Ni-sirohydrochlorin. This chain is Sirohydrochlorin cobaltochelatase, found in Methanococcus maripaludis (strain DSM 14266 / JCM 13030 / NBRC 101832 / S2 / LL).